The primary structure comprises 305 residues: Superkiller complex protein 8 (305 aa).

WD repeat units lie at residues 14–57, 62–101, 104–143, 146–187, 188–227, 230–269, and 272–305; these read AHED…LELQ, GHQLGVVSVDVSPSGNIMASSSLDAHIRLWDLESGKQIRA, AGPVDAWSVAFSPDSQHLATGSHVGKVNIFGVETGKKEYS, TRGK…HTLE, GHAMPIRSLTFSPDSQLLVTASDDGYIKIYEVQHASLAAT, GHGSWVLNVAFSPDDTHFVSSSSDKSVKVWDVSARTCVHT, and DHQDQVWGVKYNKNGSKIVSVADDQEIHVYDCPI.

It belongs to the SKI8 family. Component of the PAF1 complex. Component of the SKI complex.

The protein localises to the nucleus. It localises to the cytoplasm. Functionally, component of the PAF1 complex (PAF1C) which has multiple functions during transcription by RNA polymerase II and is implicated in regulation of development and maintenance of embryonic stem cell pluripotency. PAF1C associates with RNA polymerase II through interaction with POLR2A CTD non-phosphorylated and 'Ser-2'- and 'Ser-5'-phosphorylated forms and is involved in transcriptional elongation, acting both independently and synergistically with TCEA1 and in cooperation with the DSIF complex and HTATSF1. Also acts as a component of the SKI complex, a multiprotein complex that assists the RNA-degrading exosome during the mRNA decay and quality-control pathways. The SKI complex catalyzes mRNA extraction from 80S ribosomal complexes in the 3'-5' direction and channels mRNA to the cytosolic exosome for degradation. The protein is Superkiller complex protein 8 (skic8) of Xenopus tropicalis (Western clawed frog).